Reading from the N-terminus, the 794-residue chain is Signal transducer and activator of transcription 5A (794 aa).

Tyrosine 90 bears the Phosphotyrosine mark. Serine 129 carries the phosphoserine modification. Positions 589-686 constitute an SH2 domain; sequence WNDGAILGFV…EVFSKYYTPV (98 aa). At tyrosine 682 the chain carries Phosphotyrosine. Position 694 is a phosphotyrosine; by JAK2 (tyrosine 694). The tract at residues 765-794 is disordered; it reads EELLRRPNGQSGPLSPPPAGLFTPARGSLS.

The protein belongs to the transcription factor STAT family. Forms a homodimer or a heterodimer with a related family member. Binds NR3C1. Interacts with NCOA1 and SOCS7. Interacts with ERBB4. Interacts with EBF4. Interacts with CD69. Post-translationally, ISGylated. Tyrosine phosphorylated in response to KITLG/SCF, IL2, IL3, IL7, IL15, CSF2/GMCSF, GH1, PRL, EPO and THPO. Activated KIT promotes phosphorylation on tyrosine residues and subsequent translocation to the nucleus. Tyrosine phosphorylated in response to constitutively activated FGFR1, FGFR2, FGFR3 and FGFR4. Tyrosine phosphorylation is required for DNA-binding activity and dimerization. Serine phosphorylation is also required for maximal transcriptional activity. Tyrosine phosphorylated in response to signaling via activated FLT3; wild-type FLT3 results in much weaker phosphorylation than constitutively activated mutant FLT3. Alternatively, can be phosphorylated by JAK2 at Tyr-694. As to expression, found in mammary gland and, in lesser extent, in ovary, thymus, spleen, kidney, lung, muscle and adrenal gland.

It localises to the cytoplasm. It is found in the nucleus. Carries out a dual function: signal transduction and activation of transcription. Mediates cellular responses to the cytokine KITLG/SCF and other growth factors. May mediate cellular responses to activated FGFR1, FGFR2, FGFR3 and FGFR4. Binds to the GAS element and activates PRL-induced transcription. Regulates the expression of milk proteins during lactation. The chain is Signal transducer and activator of transcription 5A (STAT5A) from Ovis aries (Sheep).